The primary structure comprises 326 residues: Tetraketide alpha-pyrone reductase 1 (326 aa).

NADP(+) contacts are provided by residues 8–32, Lys44, and Tyr162; that span reads VCVTGASGFLASWLVKRLLLEGYEV.

Belongs to the NAD(P)-dependent epimerase/dehydratase family. Dihydroflavonol-4-reductase subfamily. In terms of assembly, interacts with 4CLL1/ACOS5, PKSA and PKSB. In terms of tissue distribution, specifically expressed in anther tapetal cells during microspores development.

The protein resides in the cytoplasm. It localises to the nucleus. Its subcellular location is the endoplasmic reticulum. In terms of biological role, involved in the biosynthesis of hydroxylated tetraketide compounds that serve as sporopollenin precursors (the main constituents of exine). Is essential for pollen wall development. Acts on tetraketide alpha-pyrones and reduces the carbonyl function on the tetraketide alkyl chain to a secondary alcohol function. The sequence is that of Tetraketide alpha-pyrone reductase 1 (TKPR1) from Arabidopsis thaliana (Mouse-ear cress).